Here is a 367-residue protein sequence, read N- to C-terminus: Molybdenum import ATP-binding protein ModC (367 aa).

One can recognise an ABC transporter domain in the interval 1-234; the sequence is MSSAALEVRL…PALSGGFGHE (234 aa). 33 to 40 lines the ATP pocket; the sequence is GPSGAGKS. The 74-residue stretch at 293-366 folds into the Mop domain; it reads HISLHNILPV…IKSVAVDVLG (74 aa).

The protein belongs to the ABC transporter superfamily. Molybdate importer (TC 3.A.1.8) family. In terms of assembly, the complex is composed of two ATP-binding proteins (ModC), two transmembrane proteins (ModB) and a solute-binding protein (ModA).

It localises to the cell inner membrane. The enzyme catalyses molybdate(out) + ATP + H2O = molybdate(in) + ADP + phosphate + H(+). Part of the ABC transporter complex ModABC involved in molybdenum import. Responsible for energy coupling to the transport system. The polypeptide is Molybdenum import ATP-binding protein ModC (Granulibacter bethesdensis (strain ATCC BAA-1260 / CGDNIH1)).